The primary structure comprises 282 residues: DNA-directed RNA polymerase III subunit RPC5 (282 aa).

The interval 1–70 is disordered; sequence MSIDNKLFVT…TGEEEEDDPV (70 aa). 2 stretches are compositionally biased toward acidic residues: residues 10–35 and 60–70; these read TEEDEEDRTQDRADVEDESNDIDMIA and DTGEEEEDDPV. Thr61 is modified (phosphothreonine).

As to quaternary structure, component of the RNA polymerase III (Pol III) complex consisting of 17 subunits. Interacts with RPC53/RPC4. RPC53/RPC4, RPC37/RPC5 and RPC11/RPC10 probably form a Pol III subcomplex.

It is found in the nucleus. DNA-dependent RNA polymerase catalyzes the transcription of DNA into RNA using the four ribonucleoside triphosphates as substrates. Specific peripheric component of RNA polymerase III which synthesizes small RNAs, such as 5S rRNA and tRNAs. The RPC53/RPC4-RPC37/RPC5 subcomplex is required for terminator recognition and reinitiation. The polypeptide is DNA-directed RNA polymerase III subunit RPC5 (RPC37) (Saccharomyces cerevisiae (strain ATCC 204508 / S288c) (Baker's yeast)).